We begin with the raw amino-acid sequence, 376 residues long: Chaperone protein DnaJ (376 aa).

In terms of domain architecture, J spans 5-70 (DYYEILGVSK…QKRAAYDQYG (66 aa)). The segment at 131-209 (GVTKEIRIPT…CHGHGRVERS (79 aa)) adopts a CR-type zinc-finger fold. 8 residues coordinate Zn(2+): cysteine 144, cysteine 147, cysteine 161, cysteine 164, cysteine 183, cysteine 186, cysteine 197, and cysteine 200. CXXCXGXG motif repeat units follow at residues 144–151 (CDVCHGSG), 161–168 (CPTCHGSG), 183–190 (CPHCQGRG), and 197–204 (CNKCHGHG).

It belongs to the DnaJ family. In terms of assembly, homodimer. Zn(2+) serves as cofactor.

It localises to the cytoplasm. Participates actively in the response to hyperosmotic and heat shock by preventing the aggregation of stress-denatured proteins and by disaggregating proteins, also in an autonomous, DnaK-independent fashion. Unfolded proteins bind initially to DnaJ; upon interaction with the DnaJ-bound protein, DnaK hydrolyzes its bound ATP, resulting in the formation of a stable complex. GrpE releases ADP from DnaK; ATP binding to DnaK triggers the release of the substrate protein, thus completing the reaction cycle. Several rounds of ATP-dependent interactions between DnaJ, DnaK and GrpE are required for fully efficient folding. Also involved, together with DnaK and GrpE, in the DNA replication of plasmids through activation of initiation proteins. The protein is Chaperone protein DnaJ of Shigella dysenteriae serotype 1 (strain Sd197).